Consider the following 635-residue polypeptide: Histone-lysine N-methyltransferase Su(var)3-9 (635 aa).

The binds to Su(var)205 and Suvar(3)7 stretch occupies residues 81–188 (ERLSEKKIKN…LNGFAKLKRR (108 aa)). 2 disordered regions span residues 123–161 (RLCTKPASSSMPASTSSVDRRTTRRSTSQTSLSPSNSSG) and 191–210 (SCVGAPTPNSKRSKNNMGVI). Composition is skewed to low complexity over residues 128–139 (PASSSMPASTSS) and 147–161 (RSTSQTSLSPSNSSG). Residues 219 to 278 (YVVERIECVEMDQYQPVFFVKWLGYHDSENTWESLANVADCAEMEKFVERHQQLYETYIA) enclose the Chromo domain. Residues 410-474 (VGCKCTEDTE…SCSNRLVQHG (65 aa)) form the Pre-SET domain. Zn(2+) is bound by residues Cys-412, Cys-414, Cys-421, Cys-427, Cys-428, Cys-456, Cys-460, Cys-462, and Cys-466. Positions 477-603 (VPLVLFKTAN…AGEELSFDYI (127 aa)) constitute an SET domain. S-adenosyl-L-methionine contacts are provided by residues 488–490 (SGW), Tyr-531, and 560–561 (NH). Residues Cys-563, Cys-623, Cys-625, and Cys-630 each contribute to the Zn(2+) site. In terms of domain architecture, Post-SET spans 619–635 (VRVECRCGRDNCRKVLF).

The protein belongs to the class V-like SAM-binding methyltransferase superfamily. Histone-lysine methyltransferase family. Suvar3-9 subfamily. In terms of assembly, interacts with Su(var)205 and Su(var)3-7. Probably associates with HDAC1/Rpd3. Interacts with Rrp6; the interaction promotes association of Rrp6 with a subset of genomic loci.

The protein localises to the nucleus. It localises to the chromosome. Its subcellular location is the centromere. It carries out the reaction L-lysyl(9)-[histone H3] + 3 S-adenosyl-L-methionine = N(6),N(6),N(6)-trimethyl-L-lysyl(9)-[histone H3] + 3 S-adenosyl-L-homocysteine + 3 H(+). Histone methyltransferase that specifically trimethylates 'Lys-9' of histone H3 using monomethylated H3 'Lys-9' as substrate. H3 'Lys-9' trimethylation represents a specific tag for epigenetic transcriptional repression by recruiting Su(var)205/HP1 to methylated histones. Mainly functions in heterochromatin regions, thereby playing a central role in the establishment of constitutive heterochromatin at pericentric regions. Involved in heterochromatic gene silencing including the modification of position-effect-variegation. The sequence is that of Histone-lysine N-methyltransferase Su(var)3-9 (Su(var)3-9) from Drosophila melanogaster (Fruit fly).